A 179-amino-acid polypeptide reads, in one-letter code: Guanosine-3',5'-bis(diphosphate) 3'-pyrophosphohydrolase MESH1 (179 aa).

One can recognise an HD domain in the interval 32–127 (YINHPLGVAR…VKLADKLYNL (96 aa)). Mn(2+)-binding residues include His35, His61, and Asp62. Residues Glu65 and Asp66 each act as nucleophile in the active site. Asp122 provides a ligand contact to Mn(2+).

The protein belongs to the MESH1 family. The cofactor is Mn(2+).

It catalyses the reaction guanosine 3',5'-bis(diphosphate) + H2O = GDP + diphosphate + H(+). PpGpp hydrolyzing enzyme involved in starvation response. The protein is Guanosine-3',5'-bis(diphosphate) 3'-pyrophosphohydrolase MESH1 (hddc3) of Xenopus tropicalis (Western clawed frog).